The chain runs to 406 residues: Tyrosine--tRNA ligase (406 aa).

Residue Y39 participates in L-tyrosine binding. A 'HIGH' region motif is present at residues P44–H53. Positions 172 and 176 each coordinate L-tyrosine. The 'KMSKS' region motif lies at K232–T236. ATP is bound at residue K235. An S4 RNA-binding domain is found at K344–V404.

This sequence belongs to the class-I aminoacyl-tRNA synthetase family. TyrS type 1 subfamily. Homodimer.

The protein localises to the cytoplasm. The enzyme catalyses tRNA(Tyr) + L-tyrosine + ATP = L-tyrosyl-tRNA(Tyr) + AMP + diphosphate + H(+). In terms of biological role, catalyzes the attachment of tyrosine to tRNA(Tyr) in a two-step reaction: tyrosine is first activated by ATP to form Tyr-AMP and then transferred to the acceptor end of tRNA(Tyr). In Fusobacterium nucleatum subsp. nucleatum (strain ATCC 25586 / DSM 15643 / BCRC 10681 / CIP 101130 / JCM 8532 / KCTC 2640 / LMG 13131 / VPI 4355), this protein is Tyrosine--tRNA ligase.